A 493-amino-acid polypeptide reads, in one-letter code: Ketol-acid reductoisomerase (NADP(+)) (493 aa).

The region spanning 17–208 (LSQCRFMDRS…GGDRAGVLHS (192 aa)) is the KARI N-terminal Rossmann domain. NADP(+) is bound by residues 45–48 (CGAQ), Arg68, Arg76, Ser78, and 108–110 (DKQ). Residue His132 is part of the active site. Gly158 lines the NADP(+) pocket. KARI C-terminal knotted domains are found at residues 209–344 (SFIA…NAPS) and 345–486 (SNEH…MKDM). The Mg(2+) site is built by Asp217, Glu221, Glu389, and Glu393. Ser414 serves as a coordination point for substrate.

This sequence belongs to the ketol-acid reductoisomerase family. Mg(2+) serves as cofactor.

It carries out the reaction (2R)-2,3-dihydroxy-3-methylbutanoate + NADP(+) = (2S)-2-acetolactate + NADPH + H(+). The enzyme catalyses (2R,3R)-2,3-dihydroxy-3-methylpentanoate + NADP(+) = (S)-2-ethyl-2-hydroxy-3-oxobutanoate + NADPH + H(+). It participates in amino-acid biosynthesis; L-isoleucine biosynthesis; L-isoleucine from 2-oxobutanoate: step 2/4. It functions in the pathway amino-acid biosynthesis; L-valine biosynthesis; L-valine from pyruvate: step 2/4. Involved in the biosynthesis of branched-chain amino acids (BCAA). Catalyzes an alkyl-migration followed by a ketol-acid reduction of (S)-2-acetolactate (S2AL) to yield (R)-2,3-dihydroxy-isovalerate. In the isomerase reaction, S2AL is rearranged via a Mg-dependent methyl migration to produce 3-hydroxy-3-methyl-2-ketobutyrate (HMKB). In the reductase reaction, this 2-ketoacid undergoes a metal-dependent reduction by NADPH to yield (R)-2,3-dihydroxy-isovalerate. This Shewanella amazonensis (strain ATCC BAA-1098 / SB2B) protein is Ketol-acid reductoisomerase (NADP(+)).